The chain runs to 432 residues: Adenosylmethionine-8-amino-7-oxononanoate aminotransferase (432 aa).

W52 is a binding site for substrate. A pyridoxal 5'-phosphate-binding site is contributed by 112-113 (GS). Y144 provides a ligand contact to substrate. Residue D245 participates in pyridoxal 5'-phosphate binding. The substrate site is built by K274 and G307. K274 is modified (N6-(pyridoxal phosphate)lysine). 308 to 309 (PT) contacts pyridoxal 5'-phosphate. Substrate is bound at residue R391.

The protein belongs to the class-III pyridoxal-phosphate-dependent aminotransferase family. BioA subfamily. In terms of assembly, homodimer. Pyridoxal 5'-phosphate serves as cofactor.

It localises to the cytoplasm. It catalyses the reaction (8S)-8-amino-7-oxononanoate + S-adenosyl-L-methionine = S-adenosyl-4-methylsulfanyl-2-oxobutanoate + (7R,8S)-7,8-diammoniononanoate. It functions in the pathway cofactor biosynthesis; biotin biosynthesis; 7,8-diaminononanoate from 8-amino-7-oxononanoate (SAM route): step 1/1. Its function is as follows. Catalyzes the transfer of the alpha-amino group from S-adenosyl-L-methionine (SAM) to 7-keto-8-aminopelargonic acid (KAPA) to form 7,8-diaminopelargonic acid (DAPA). It is the only aminotransferase known to utilize SAM as an amino donor. In Buchnera aphidicola subsp. Schizaphis graminum (strain Sg), this protein is Adenosylmethionine-8-amino-7-oxononanoate aminotransferase.